Reading from the N-terminus, the 96-residue chain is Defensin-like protein 69 (96 aa).

The signal sequence occupies residues 1 to 19 (MGSSKLLVAFTLIVMMTIS). Disulfide bonds link Cys37–Cys86, Cys41–Cys64, Cys50–Cys84, and Cys54–Cys85.

The protein belongs to the DEFL family.

It localises to the secreted. In Arabidopsis thaliana (Mouse-ear cress), this protein is Defensin-like protein 69.